The sequence spans 145 residues: Putative esterase PA1618 (145 aa).

It belongs to the thioesterase PaaI family.

The polypeptide is Putative esterase PA1618 (Pseudomonas aeruginosa (strain ATCC 15692 / DSM 22644 / CIP 104116 / JCM 14847 / LMG 12228 / 1C / PRS 101 / PAO1)).